A 225-amino-acid chain; its full sequence is Cytidylate kinase (225 aa).

10–18 (GPASSGKST) contributes to the ATP binding site.

It belongs to the cytidylate kinase family. Type 1 subfamily.

The protein resides in the cytoplasm. The catalysed reaction is CMP + ATP = CDP + ADP. It carries out the reaction dCMP + ATP = dCDP + ADP. The polypeptide is Cytidylate kinase (Streptococcus suis (strain 98HAH33)).